The chain runs to 95 residues: Transcription and mRNA export factor ENY2-2 (95 aa).

It belongs to the ENY2 family. Component of the nuclear pore complex (NPC)-associated TREX-2 complex (transcription and export complex 2). Component of the SAGA transcription coactivator-HAT complex. Within the SAGA complex, participates in a subcomplex of SAGA called the DUB module (deubiquitination module).

Its subcellular location is the nucleus. The protein resides in the nucleoplasm. Involved in mRNA export coupled transcription activation by association with both the TREX-2 and the SAGA complexes. The transcription regulatory histone acetylation (HAT) complex SAGA is a multiprotein complex that activates transcription by remodeling chromatin and mediating histone acetylation and deubiquitination. Within the SAGA complex, participates in a subcomplex that specifically deubiquitinates histones. The SAGA complex is recruited to specific gene promoters by activators, where it is required for transcription. The TREX-2 complex functions in docking export-competent ribonucleoprotein particles (mRNPs) to the nuclear entrance of the nuclear pore complex (nuclear basket). TREX-2 participates in mRNA export and accurate chromatin positioning in the nucleus by tethering genes to the nuclear periphery. The chain is Transcription and mRNA export factor ENY2-2 (eny2-2) from Salmo salar (Atlantic salmon).